The following is a 245-amino-acid chain: 14-3-3 protein zeta/delta (245 aa).

N-acetylmethionine is present on methionine 1. Position 3 is an N6-acetyllysine (lysine 3). At serine 58 the chain carries Phosphoserine; by PKA. Lysine 68 is subject to N6-acetyllysine. Residues serine 184, serine 207, and serine 210 each carry the phosphoserine modification. Threonine 232 is modified (phosphothreonine; by CK1).

This sequence belongs to the 14-3-3 family. As to quaternary structure, homodimer. Heterodimerizes with YWHAE. Homo- and heterodimerization is inhibited by phosphorylation on Ser-58. Interacts with FOXO4, NOXA1, SSH1 and ARHGEF2. Interacts with CDK16 and with WEE1 (C-terminal). Interacts with MLF1 (phosphorylated form); the interaction retains it in the cytoplasm. Interacts with BSPRY. Interacts with Thr-phosphorylated ITGB2. Interacts with Pseudomonas aeruginosa exoS (unphosphorylated form). Interacts with BAX; the interaction occurs in the cytoplasm. Under stress conditions, MAPK8-mediated phosphorylation releases BAX to mitochondria. Interacts with phosphorylated RAF1; the interaction is inhibited when YWHAZ is phosphorylated on Thr-232. Interacts with TP53; the interaction enhances p53 transcriptional activity. The Ser-58 phosphorylated form inhibits this interaction and p53 transcriptional activity. Interacts with ABL1 (phosphorylated form); the interaction retains ABL1 in the cytoplasm. Interacts with PKA-phosphorylated AANAT; the interaction modulates AANAT enzymatic activity by increasing affinity for arylalkylamines and acetyl-CoA and protecting the enzyme from dephosphorylation and proteasomal degradation. It may also prevent thiol-dependent inactivation. Interacts with AKT1; the interaction phosphorylates YWHAZ and modulates dimerization. Interacts with GAB2. Interacts with SAMSN1. Interacts with BCL2L11 and TLK2. Interacts with the 'Thr-369' phosphorylated form of DAPK2. Interacts with PI4KB, TBC1D22A and TBC1D22B. Interacts with ZFP36L1 (via phosphorylated form); this interaction occurs in a p38 MAPK- and AKT-signaling pathways. Interacts with SLITRK1. Interacts with AK5, LDB1, MADD, PDE1A and SMARCB1. Interacts with ARHGEF7 and GIT1. Interacts with MEFV. Interacts with ADAM22 (via C-terminus). In terms of processing, the delta, brain-specific form differs from the zeta form in being phosphorylated. Phosphorylation on Ser-184 by MAPK8; promotes dissociation of BAX and translocation of BAX to mitochondria. Phosphorylation on Thr-232; inhibits binding of RAF1. Phosphorylated on Ser-58 by PKA and protein kinase C delta type catalytic subunit in a sphingosine-dependent fashion. Phosphorylation on Ser-58 by PKA; disrupts homodimerization and heterodimerization with YHAE and TP53.

Its subcellular location is the cytoplasm. It is found in the melanosome. In terms of biological role, adapter protein implicated in the regulation of a large spectrum of both general and specialized signaling pathways. Binds to a large number of partners, usually by recognition of a phosphoserine or phosphothreonine motif. Binding generally results in the modulation of the activity of the binding partner. Promotes cytosolic retention and inactivation of TFEB transcription factor by binding to phosphorylated TFEB. Induces ARHGEF7 activity on RAC1 as well as lamellipodia and membrane ruffle formation. In neurons, regulates spine maturation through the modulation of ARHGEF7 activity. The chain is 14-3-3 protein zeta/delta (Ywhaz) from Mus musculus (Mouse).